The following is a 735-amino-acid chain: Protein-associating with the carboxyl-terminal domain of ezrin (735 aa).

A lipid anchor (N-myristoyl glycine) is attached at Gly-2. The region spanning 2 to 245 (GSENSALKSY…LSTLLSHDFF (244 aa)) is the Protein kinase domain. HEAT repeat units lie at residues 194-249 (FGAL…RNDF), 285-323 (LIAS…NAPG), 333-370 (LFQS…HFTQ), and 372-409 (QLKK…LLGP). Ser-439 carries the phosphoserine modification. Disordered regions lie at residues 505–545 (LSDV…ASIH) and 604–648 (VPLT…GLGL). Residues 528-538 (WPDWSEPEEPE) show a composition bias toward acidic residues. Positions 547-735 (WPREPCDVAE…EELAWEDNNW (189 aa)) are interaction with EZR. Residue Ser-701 is modified to Phosphoserine.

This sequence belongs to the protein kinase superfamily. Interacts with EZR/VIL2 C-terminal domain. May be myristoylated; myristoylation may target it to Golgi compartment.

The protein localises to the cytoplasm. Its subcellular location is the golgi apparatus. The protein resides in the cell projection. It is found in the lamellipodium. May play a role in regulating cell adhesion/migration complexes in migrating cells. The protein is Protein-associating with the carboxyl-terminal domain of ezrin (Scyl3) of Mus musculus (Mouse).